Reading from the N-terminus, the 307-residue chain is uncharacterized protein (307 aa).

The region spanning 11 to 68 (IRLRHLHTFVAVAQQGTLGRAAETLNLSQPALSKTLNELEQLTGARLFERGRQGAQLT) is the HTH lysR-type domain. The H-T-H motif DNA-binding region spans 28–47 (LGRAAETLNLSQPALSKTLN).

This sequence belongs to the LysR transcriptional regulatory family.

This is an uncharacterized protein from Escherichia coli (strain K12).